Reading from the N-terminus, the 312-residue chain is Serine/threonine-protein phosphatase PP1 isozyme 2 (312 aa).

At alanine 2 the chain carries N-acetylalanine. Positions 70, 72, 98, and 130 each coordinate Mn(2+). Catalysis depends on histidine 131, which acts as the Proton donor. The Mn(2+) site is built by histidine 179 and histidine 254.

Belongs to the PPP phosphatase family. PP-1 subfamily. In terms of assembly, interacts with SRK2D/SNRK2.2 and SRK2E/SNRK2.6. Mn(2+) is required as a cofactor.

Its subcellular location is the nucleus. It localises to the cytoplasm. The enzyme catalyses O-phospho-L-seryl-[protein] + H2O = L-seryl-[protein] + phosphate. It catalyses the reaction O-phospho-L-threonyl-[protein] + H2O = L-threonyl-[protein] + phosphate. Phosphatase activity is strongly reduced by the protein phosphatase inhibitor 2 (I-2). In terms of biological role, serine/threonine-protein phosphatase that possesses phosphatase activity toward para-nitrophenyl phosphate (pNPP) in vitro. This is Serine/threonine-protein phosphatase PP1 isozyme 2 from Arabidopsis thaliana (Mouse-ear cress).